The primary structure comprises 594 residues: Sodium-dependent glucose transporter 1 (594 aa).

Transmembrane regions (helical) follow at residues 77 to 97, 115 to 137, 144 to 161, 166 to 186, 205 to 225, 269 to 289, 311 to 331, 349 to 371, 393 to 413, 439 to 459, and 467 to 487; these read WLVSLALCASFLGLGMAISVL, LSYIFVGRASGYIGGSLLGGILF, LLLGFALLTTAFGMSGTP, AWVLTVLMSSVGVSMGVLDTG, ALHFSFAAGAFASPIIAKLLF, IVIGAFVLLVSLLFFSLYFCI, TLIILLSMFFFFYVGSEVAYG, AAGLNSLFWGAFAAGRGLAIFFA, LLCLFSQNYPMLWACTALYGI, IFVVGAALGEMVLPALLGFLL, and LLMYLTLCTATFTSILFPVLY.

It belongs to the major facilitator superfamily.

It localises to the apical cell membrane. May function as a sodium-dependent glucose transporter. Potential channels for urea in the inner medulla of kidney. The sequence is that of Sodium-dependent glucose transporter 1 (mfsd4b) from Danio rerio (Zebrafish).